The sequence spans 790 residues: MATTKQKVTAPSPSPSSSTASCCPSTSILRREATAAIAVVGDGLQNWTNIPSVDEKQKKTASSALASLPTTEPLSTNTSTKGIQIMTRAQTCHPLDPLSAAEISVAVATVRAAGETPEVRDGMRFIEVVLVEPDKSVVALADAYFFPPFQSSLMPRTKGGSQIPTKLPPRRARLIVYNKKTNETSIWIVELNEVHAAARGGHHRGKVIASNVVPDVQPPIDAQEYAECEAVVKSYPPFRDAMRRRGIDDLDLVMVDPWCVGYHSEADAPSRRLAKPLVFCRTESDCPMENGYARPVEGIYVLVDVQNMQIIEFEDRKLVPLPPVDPLRNYTAGETRGGVDRSDVKPLHIIQPEGPSFRISGNYVEWQKWNFRIGFTPREGLVIHSVAYLDGSRGRRPIAHRLSFVEMVVPYGDPNDPHYRKNAFDAGEDGLGKNAHSLKRGCDCLGYIKYFDAHFTNFTGGVETTENCVCLHEEDHGMLWKHQDWRTGLAEVRRSRRLTVSFVCTVANYEYAFYWHFYQDGKIEAEVKLTGILSLGALQPGEYRKYGTTILPGLYAPVHQHFFVARMNMAVDCKPGEAHNQVVEVNVKVEEPGKENVHNNAFYAEETLLRSELQAMRDCDPFSARHWIVRNTRTVNRTGQLTGYKLVPGPNCLPLAGPEAKFLRRAAFLKHNLWVTQYAPGEDFPGGEFPNQNPRVGEGLASWVKQDRPLEESDIVLWYIFGITHVPRLEDWPVMPVEHIGFVLQPHGYFNCSPAVDVPPPFACDSESRDSDVTETSVAKSTATSLLAKL.

The interval 1 to 23 (MATTKQKVTAPSPSPSSSTASCC) is disordered. Residues 9 to 23 (TAPSPSPSSSTASCC) show a composition bias toward low complexity. 423-434 (AFDAGEDGLGKN) is a substrate binding site. The active-site Proton acceptor is aspartate 425. Residues cysteine 444 and cysteine 470 are joined by a disulfide bond. 506-511 (VANYEY) is a binding site for substrate. The active-site Schiff-base intermediate with substrate; via topaquinone is the tyrosine 509. Tyrosine 509 is modified (2',4',5'-topaquinone). Cu cation is bound by residues histidine 559 and histidine 561. Mn(2+) is bound by residues aspartate 714 and isoleucine 715. Histidine 725 is a binding site for Cu cation.

This sequence belongs to the copper/topaquinone oxidase family. As to quaternary structure, homodimer. The cofactor is Cu cation. Requires Zn(2+) as cofactor. L-topaquinone is required as a cofactor. In terms of processing, topaquinone (TPQ) is generated by copper-dependent autoxidation of a specific tyrosyl residue. Mainly expressed in roots, and, to a lower extent, in stems.

Its subcellular location is the peroxisome. The catalysed reaction is a primary methyl amine + O2 + H2O = an aldehyde + H2O2 + NH4(+). It carries out the reaction N-methylputrescine + O2 + H2O = 4-methylaminobutanal + H2O2 + NH4(+). Its pathway is alkaloid biosynthesis; nicotine biosynthesis. In terms of biological role, involved in the biosynthesis of pyridine alkaloid natural products, leading mainly to the production of anabasine, anatabine, nicotine and nornicotine, effective deterrents against herbivores with antiparasitic and pesticide properties (neurotoxins); nornicotine serves as the precursor in the synthesis of the carcinogen compound N'-nitrosonornicotine (NNN). Amine oxidase which mediates the deamination of N-methylputrescine to produce 4-methylaminobutanal. Oxidizes preferentially N-methylated amines. The polypeptide is N-methylputrescine oxidase 1, peroxisomal (Nicotiana tabacum (Common tobacco)).